The sequence spans 502 residues: Neuronal acetylcholine receptor subunit alpha-7 (502 aa).

The first 22 residues, 1-22, serve as a signal peptide directing secretion; it reads MCGGRGGIWLALAAALLHVSLQ. Topologically, residues 23–233 are extracellular; sequence GEFQRRLYKE…VTMRRRTLYY (211 aa). The Ca(2+) site is built by arginine 42 and valine 44. N-linked (GlcNAc...) asparagine glycosylation is found at asparagine 46, asparagine 90, and asparagine 133. A disulfide bond links cysteine 150 and cysteine 164. Ca(2+) is bound by residues serine 172 and tyrosine 210. Cysteine 212 and cysteine 213 are joined by a disulfide. The next 3 membrane-spanning stretches (helical) occupy residues 234-254, 262-282, and 295-315; these read GLNL…VFLL, ISLG…VAEI, and QYFA…VIVL. The interval 260 to 267 is essential for TMEM35A/NACHO-mediated proper subunit assembly and trafficking to cell membrane; that stretch reads EKISLGIT. The Cytoplasmic portion of the chain corresponds to 316–469; sequence RYHHHDPDGG…WKFAACVVDR (154 aa). A helical membrane pass occupies residues 470–490; the sequence is LCLMAFSVFTIICTIGILMSA.

Belongs to the ligand-gated ion channel (TC 1.A.9) family. Acetylcholine receptor (TC 1.A.9.1) subfamily. Alpha-7/CHRNA7 sub-subfamily. Homopentamer. Can also form heteropentamers with CHRNB2, mainly found in basal forebrain cholinergic neurons. Interacts with RIC3; which is required for proper folding and assembly. Interacts with LYPD6. Interacts with CANX. Glycosylations at Asn-46, Asn-90 and Asn-133 are essential for TMEM35A/NACHO-mediated proper subunit assembly and trafficking to the cell membrane. As to expression, expressed in neurons. Expressed in umbrella cells of urothelium (at protein level).

Its subcellular location is the postsynaptic cell membrane. The protein localises to the cell membrane. It carries out the reaction Ca(2+)(in) = Ca(2+)(out). The catalysed reaction is K(+)(in) = K(+)(out). The enzyme catalyses Na(+)(in) = Na(+)(out). It catalyses the reaction choline(out) = choline(in). It carries out the reaction NH4(+)(in) = NH4(+)(out). The catalysed reaction is L-arginine(in) = L-arginine(out). The enzyme catalyses guanidine(out) = guanidine(in). Its activity is regulated as follows. Activated by a myriad of ligands such as acetylcholine, cytisine, nicotine, choline and epibatidine. Oligomeric amyloid-beta protein 42 activates specifially CHRNA7:CHRNB2 nAchRs. Activity is modulated by positive allosteric modulators (PAMs), such as flavonoids, with a wide range of chemical diversity, pharmacological sensitivity and efficacy. AChR activity is inhibited by the antagonists alpha-conotoxons RgIA, ImI and ImII, small disulfide-constrained peptides from cone snails. Alpha-conotoxin PnIC selectively inhibits CHRNA7:CHRNB2 over CHRNA7 homopentamer. In terms of biological role, component of neuronal acetylcholine receptors (nAChRs) that function as pentameric, ligand-gated cation channels with high calcium permeability among other activities. nAChRs are excitatory neurotrasnmitter receptors formed by a collection of nAChR subunits known to mediate synaptic transmission in the nervous system and the neuromuscular junction. Each nAchR subunit confers differential attributes to channel properties, including activation, deactivation and desensitization kinetics, pH sensitivity, cation permeability, and binding to allosteric modulators. CHRNA7 forms homopentameric neuronal acetylcholine receptors abundantly expressed in the central nervous system, characterized by fast desensitization and high calcium permeability. Also forms heteropentamers with CHRNB2, mainly expressed in basal forebrain cholinergic neurons. Involved in the modulation of calcium-dependent signaling pathways and influences the release of neurotransmitters, including dopamine, glutamate and GABA. Also expressed in non-neuronal cells such as immune cells like lymphocytes, monocytes and macrophages. In T cells, activation induces metabotropic signaling that results in an increase of intracellular Ca2+ concentrations, independent of ionotropic receptor functions. In macrophages, required for acetylcholine-mediated inhibition of TNF and other inflammatory cytokine release. Once activated by acetylcholine, nicotine or other agonists, selectively inhibits production of pro-inflammatory cytokines while leaving anti-inflammatory cytokines undisturbed. Stimulates the cholinergic anti-inflammatory pathway, controlling inflammation by inhibiting NFKB nuclear translocation and activating the JAK2-STAT3 pathway, independently of ion channel activity. Also expressed in the urothelium where it modulates reflex bladder activity by increasing intracellular calcium through internal stores and decreasing basal ATP release. The polypeptide is Neuronal acetylcholine receptor subunit alpha-7 (Chrna7) (Rattus norvegicus (Rat)).